Reading from the N-terminus, the 276-residue chain is UPF0328 protein ECU03_0010 (276 aa).

Disordered stretches follow at residues methionine 1 to serine 132 and serine 156 to histidine 176. Residues histidine 106–threonine 126 show a composition bias toward basic and acidic residues.

The protein belongs to the UPF0328 family.

The protein is UPF0328 protein ECU03_0010 of Encephalitozoon cuniculi (strain GB-M1) (Microsporidian parasite).